The sequence spans 778 residues: Transcription factor kayak (778 aa).

Low complexity-rich tracts occupy residues 24-54 (AQQL…HTQQ) and 77-98 (QYYQ…QRQL). 6 disordered regions span residues 24 to 57 (AQQL…QNGL), 76 to 130 (NQYY…HQLR), 183 to 223 (QPTA…TTNG), 294 to 320 (APLV…VLAS), 356 to 414 (ASVM…GTGG), and 427 to 478 (RNTN…RKRR). The segment covering 99–108 (PTQQPAASYE) has biased composition (polar residues). Low complexity-rich tracts occupy residues 109 to 130 (QQQQ…HQLR) and 183 to 222 (QPTA…TTTN). Low complexity predominate over residues 382–402 (ISDTSSGATDSTSYQNGHMMG). Gly residues predominate over residues 403 to 414 (NSGGGNGGGTGG). The span at 427 to 436 (RNTNTSNSAT) shows a compositional bias: polar residues. The 64-residue stretch at 457-520 (EEKRRIRRER…NQLEYFLQAH (64 aa)) folds into the bZIP domain. The segment at 459-478 (KRRIRRERNKQAAARCRKRR) is basic motif. The interval 485–513 (LTEEVELLEKRGENLKKEMELLNETKNQL) is leucine-zipper. Low complexity predominate over residues 550–571 (GSCGSGSSHHNNNSNSNDSSSG). Disordered regions lie at residues 550 to 594 (GSCG…DLKP) and 756 to 778 (TSQN…LVSL). Positions 579-589 (TLNSTGRSNSP) are enriched in polar residues. Ser-588 carries the post-translational modification Phosphoserine.

This sequence belongs to the bZIP family. Fos subfamily. In terms of assembly, homodimer. Heterodimer with Jra. The kay-Jra heterodimer binds more stably to the AP-1 site than either of the two proteins alone.

The protein localises to the nucleus. Developmentally regulated transcription factor AP-1 binds and recognizes the enhancer DNA sequence: 5'-TGA[CG]TCA-3'. May play a role in the function or determination of a particular subset of cells in the developing embryo. It is able to carry out its function either independently of or in conjunction with Jra. This is Transcription factor kayak from Drosophila pseudoobscura pseudoobscura (Fruit fly).